Reading from the N-terminus, the 94-residue chain is Integration host factor subunit beta (94 aa).

It belongs to the bacterial histone-like protein family. As to quaternary structure, heterodimer of an alpha and a beta chain.

This protein is one of the two subunits of integration host factor, a specific DNA-binding protein that functions in genetic recombination as well as in transcriptional and translational control. The chain is Integration host factor subunit beta from Caulobacter sp. (strain K31).